We begin with the raw amino-acid sequence, 122 residues long: UPF0145 protein TV0671 (122 aa).

This sequence belongs to the UPF0145 family.

The protein is UPF0145 protein TV0671 of Thermoplasma volcanium (strain ATCC 51530 / DSM 4299 / JCM 9571 / NBRC 15438 / GSS1).